The sequence spans 297 residues: Large ribosomal subunit protein uL18 (297 aa).

An N-acetylglycine modification is found at Gly2. An N6-acetyllysine mark is found at Lys5 and Lys48. Ser185 is modified (phosphoserine). At Lys220 the chain carries N6-acetyllysine; alternate. A Glycyl lysine isopeptide (Lys-Gly) (interchain with G-Cter in SUMO1); alternate cross-link involves residue Lys220. A Glycyl lysine isopeptide (Lys-Gly) (interchain with G-Cter in SUMO2); alternate cross-link involves residue Lys220. The residue at position 232 (Thr232) is a Phosphothreonine. Positions 253–297 (YEKKPKREVKKKRWNRPKMSLAQKKDRVAQKKASFLRAQERAAES) are disordered. The segment covering 258-268 (KREVKKKRWNR) has biased composition (basic residues). At Ser272 the chain carries Phosphoserine.

It belongs to the universal ribosomal protein uL18 family. In terms of assembly, component of the large ribosomal subunit (LSU). Part of the 5S RNP complex, which is a LSU subcomplex composed of the 5S RNA, RPL5 and RPL11. Component of a hexameric 5S RNP precursor complex, composed of 5S RNA, RRS1, RPF2/BXDC1, RPL5, RPL11 and HEATR3; this complex acts as a precursor for ribosome assembly. Interacts with NVL in an ATP-dependent manner. Interacts with RRP1B. Interacts with IPO5, IPO7 and KPNB1; these interactions may be involved in RPL5 nuclear import for the assembly of ribosomal subunits.

The protein resides in the cytoplasm. Its subcellular location is the nucleus. It localises to the nucleolus. Its function is as follows. Component of the ribosome, a large ribonucleoprotein complex responsible for the synthesis of proteins in the cell. The small ribosomal subunit (SSU) binds messenger RNAs (mRNAs) and translates the encoded message by selecting cognate aminoacyl-transfer RNA (tRNA) molecules. The large subunit (LSU) contains the ribosomal catalytic site termed the peptidyl transferase center (PTC), which catalyzes the formation of peptide bonds, thereby polymerizing the amino acids delivered by tRNAs into a polypeptide chain. The nascent polypeptides leave the ribosome through a tunnel in the LSU and interact with protein factors that function in enzymatic processing, targeting, and the membrane insertion of nascent chains at the exit of the ribosomal tunnel. As part of the 5S RNP/5S ribonucleoprotein particle it is an essential component of the LSU, required for its formation and the maturation of rRNAs. It also couples ribosome biogenesis to p53/TP53 activation. As part of the 5S RNP it accumulates in the nucleoplasm and inhibits MDM2, when ribosome biogenesis is perturbed, mediating the stabilization and the activation of TP53. This chain is Large ribosomal subunit protein uL18 (Rpl5), found in Mus musculus (Mouse).